We begin with the raw amino-acid sequence, 346 residues long: Putative serine/threonine-protein kinase K06H7.1 (346 aa).

The Protein kinase domain maps to 20–287; sequence YKVVQKLGEG…KLFKLLEDVM (268 aa). ATP-binding positions include 26–34 and Lys-50; that span reads LGEGGCGSV. The active-site Proton acceptor is Asp-141. Positions 302–326 are disordered; it reads PEKKKNPASQGNKFGLGKKGTKESG.

Belongs to the protein kinase superfamily. Ser/Thr protein kinase family.

It carries out the reaction L-seryl-[protein] + ATP = O-phospho-L-seryl-[protein] + ADP + H(+). It catalyses the reaction L-threonyl-[protein] + ATP = O-phospho-L-threonyl-[protein] + ADP + H(+). This chain is Putative serine/threonine-protein kinase K06H7.1, found in Caenorhabditis elegans.